The primary structure comprises 90 residues: Small ribosomal subunit protein uS15 (90 aa).

It belongs to the universal ribosomal protein uS15 family. Part of the 30S ribosomal subunit. Forms a bridge to the 50S subunit in the 70S ribosome, contacting the 23S rRNA.

Functionally, one of the primary rRNA binding proteins, it binds directly to 16S rRNA where it helps nucleate assembly of the platform of the 30S subunit by binding and bridging several RNA helices of the 16S rRNA. Its function is as follows. Forms an intersubunit bridge (bridge B4) with the 23S rRNA of the 50S subunit in the ribosome. The chain is Small ribosomal subunit protein uS15 from Herpetosiphon aurantiacus (strain ATCC 23779 / DSM 785 / 114-95).